We begin with the raw amino-acid sequence, 86 residues long: Large ribosomal subunit protein bL27 (86 aa).

Positions 1 to 22 (MAHKKAGGSSRNGRDSESKRLG) are disordered.

The protein belongs to the bacterial ribosomal protein bL27 family.

In Acidithiobacillus ferrooxidans (strain ATCC 23270 / DSM 14882 / CIP 104768 / NCIMB 8455) (Ferrobacillus ferrooxidans (strain ATCC 23270)), this protein is Large ribosomal subunit protein bL27.